Reading from the N-terminus, the 497-residue chain is Glycine receptor subunit beta (497 aa).

An N-terminal signal peptide occupies residues 1-22 (MKFLLTTAFLILISLWVEEAYS). Over 23 to 268 (KEKSSKKGKG…IFTLRRQVGF (246 aa)) the chain is Extracellular. N-linked (GlcNAc...) asparagine glycosylation is present at Asn54. Residues Arg108 and Ser174 each coordinate glycine. A disulfide bridge connects residues Cys183 and Cys197. Asn242 carries N-linked (GlcNAc...) asparagine glycosylation. Cys243 and Cys255 are joined by a disulfide. Residue Thr250 coordinates glycine. Residues 269 to 289 (YMMGVYAPTLLIVVLSWLSFW) traverse the membrane as a helical segment. At 290 to 294 (INPDA) the chain is on the cytoplasmic side. A helical membrane pass occupies residues 295 to 315 (SAARVPLGIFSVLSLASECTT). Residues 316-327 (LAAELPKVSYVK) lie on the Extracellular side of the membrane. Residues 328 to 349 (ALDVWLIACLLFGFASLVEYAV) traverse the membrane as a helical segment. The Cytoplasmic portion of the chain corresponds to 350–472 (VQVMLNNPKR…KPVIPTAAKR (123 aa)). Phosphothreonine is present on Thr391. The chain crosses the membrane as a helical span at residues 473 to 496 (IDLYARALFPFCFLFFNVIYWSIY).

Belongs to the ligand-gated ion channel (TC 1.A.9) family. Glycine receptor (TC 1.A.9.3) subfamily. GLRB sub-subfamily. In terms of assembly, forms heteropentamers with glycin receptor alpha subunits. Heteropentamers with GLRA1 can be composed of two GLRA1 and three GLRB subunits, or three GLRA1 and two GLRB subunits, or four GLRA1 subunits and one GLRB subunit. Forms heteropentamers with GLRA2. Functional GLRB-GLRA2 heteropentamers contain four GLRA2 subunits and one GLRB subunit, although alternative subunit composition cannot be excluded. Forms a heteropentamer with GLRA3. Interacts with GPHN.

The protein resides in the postsynaptic cell membrane. It is found in the synapse. Its subcellular location is the cell projection. It localises to the dendrite. The protein localises to the cell membrane. The protein resides in the cytoplasm. It carries out the reaction chloride(in) = chloride(out). Channel opening is triggered by extracellular glycine. Heteropentameric channels composed of GLRB and GLRA1 are activated by lower glycine levels than homopentameric GLRA1. Subunit of heteromeric glycine-gated chloride channels. Plays an important role in the down-regulation of neuronal excitability. Contributes to the generation of inhibitory postsynaptic currents. The chain is Glycine receptor subunit beta (GLRB) from Homo sapiens (Human).